Here is a 396-residue protein sequence, read N- to C-terminus: MSKVIFHVDVNSAFLSWTAVEKLKNGEDIDIRKVPSVIGGDEKSRHGVVLAKSTPAKKYGIVTGESLYHARKKCPNILVFPPRFDTYRKASESMMNLLKRFTPHIEKYSIDECFMDVTNDLRGMESVEFASIIKERIKNELGFTVNVGISTNRLLAKMASELNKPDKINTLYKHEIKDKMWPLPVGELFMVGKSMKRKLNELHIKTIGELAKYDVNILKAKFKSHGNMVWEYANGIDNSDISRYRDEIKCISNETTLSMDLTDTEKIHKILVTLCENLGQRLRDANKYCTSISVNIRTSDFRNYSHQKKLKNAVSSTRDIILYADKIFNEMWGREPIRLLGVQLSGLCSGSSVQISMFDEKTDTRNEILDKTLDSIRKKYGDNVIMRSVLLEKEEK.

The 188-residue stretch at 5 to 192 (IFHVDVNSAF…LPVGELFMVG (188 aa)) folds into the UmuC domain. Aspartate 9 and aspartate 111 together coordinate Mg(2+). Glutamate 112 is an active-site residue.

The protein belongs to the DNA polymerase type-Y family. In terms of assembly, monomer. Mg(2+) is required as a cofactor.

It localises to the cytoplasm. It catalyses the reaction DNA(n) + a 2'-deoxyribonucleoside 5'-triphosphate = DNA(n+1) + diphosphate. Its function is as follows. Poorly processive, error-prone DNA polymerase involved in untargeted mutagenesis. Copies undamaged DNA at stalled replication forks, which arise in vivo from mismatched or misaligned primer ends. These misaligned primers can be extended by PolIV. Exhibits no 3'-5' exonuclease (proofreading) activity. May be involved in translesional synthesis, in conjunction with the beta clamp from PolIII. This is DNA polymerase IV from Clostridium acetobutylicum (strain ATCC 824 / DSM 792 / JCM 1419 / IAM 19013 / LMG 5710 / NBRC 13948 / NRRL B-527 / VKM B-1787 / 2291 / W).